Here is a 386-residue protein sequence, read N- to C-terminus: Chaperone protein DnaJ (386 aa).

In terms of domain architecture, J spans 4–68 (NFYDVLGVSR…QKRQQYDQLG (65 aa)). Composition is skewed to basic and acidic residues over residues 22–35 (KAYR…HPDV) and 43–79 (ERFK…DKRG). The tract at residues 22–132 (KAYRKQAAEH…GGNRPRQGQD (111 aa)) is disordered. 2 stretches are compositionally biased toward gly residues: residues 80–104 (ATGG…GAGG) and 113–125 (FGGG…GGGN). The segment at 147-229 (GATKEVTLTR…CGGDGVVREE (83 aa)) adopts a CR-type zinc-finger fold. Zn(2+)-binding residues include cysteine 160, cysteine 163, cysteine 177, cysteine 180, cysteine 203, cysteine 206, cysteine 217, and cysteine 220. 4 CXXCXGXG motif repeats span residues 160 to 167 (CDTCDGAG), 177 to 184 (CSQCNGRG), 203 to 210 (CPRCEGSG), and 217 to 224 (CADCGGDG).

This sequence belongs to the DnaJ family. Homodimer. The cofactor is Zn(2+).

It is found in the cytoplasm. In terms of biological role, participates actively in the response to hyperosmotic and heat shock by preventing the aggregation of stress-denatured proteins and by disaggregating proteins, also in an autonomous, DnaK-independent fashion. Unfolded proteins bind initially to DnaJ; upon interaction with the DnaJ-bound protein, DnaK hydrolyzes its bound ATP, resulting in the formation of a stable complex. GrpE releases ADP from DnaK; ATP binding to DnaK triggers the release of the substrate protein, thus completing the reaction cycle. Several rounds of ATP-dependent interactions between DnaJ, DnaK and GrpE are required for fully efficient folding. Also involved, together with DnaK and GrpE, in the DNA replication of plasmids through activation of initiation proteins. The chain is Chaperone protein DnaJ from Halorubrum lacusprofundi (strain ATCC 49239 / DSM 5036 / JCM 8891 / ACAM 34).